Consider the following 140-residue polypeptide: Secreted RxLR effector protein 37 (140 aa).

A signal peptide spans 1-22; that stretch reads MTYRLPFVAVILFVTAKHVVLA. A RxLR-dEER motif is present at residues 57–76; it reads RFLRQLEKKPGVNDKRDEER.

Belongs to the RxLR effector family.

Its subcellular location is the secreted. The protein resides in the host nucleus. The protein localises to the host cytoplasm. Functionally, secreted effector that completely suppresses the host cell death induced by cell death-inducing proteins. The protein is Secreted RxLR effector protein 37 of Plasmopara viticola (Downy mildew of grapevine).